Reading from the N-terminus, the 124-residue chain is Fluoride-specific ion channel FluC (124 aa).

A run of 4 helical transmembrane segments spans residues 1-21, 36-56, 70-90, and 100-120; these read MLNTLVVFLGAGLGGALRYGV, TMIINVSGSLAMGILAGWFVV, TGILGGFTTFSTFSLEAFLLI, and LYVIGSVAAGIAGVAVSFAII. Positions 74 and 77 each coordinate Na(+).

The protein belongs to the fluoride channel Fluc/FEX (TC 1.A.43) family.

Its subcellular location is the cell inner membrane. It catalyses the reaction fluoride(in) = fluoride(out). Na(+) is not transported, but it plays an essential structural role and its presence is essential for fluoride channel function. In terms of biological role, fluoride-specific ion channel. Important for reducing fluoride concentration in the cell, thus reducing its toxicity. This Methylobacterium sp. (strain 4-46) protein is Fluoride-specific ion channel FluC.